Here is a 616-residue protein sequence, read N- to C-terminus: UvrABC system protein C (616 aa).

The GIY-YIG domain maps to 11–85; that stretch reads ASPGVYIFRR…IKQHRPHYNV (75 aa). One can recognise a UVR domain in the interval 194-229; the sequence is APVIARLKADMQAAARAQDFEQAARLRDRVQAVEKL.

This sequence belongs to the UvrC family. As to quaternary structure, interacts with UvrB in an incision complex.

The protein resides in the cytoplasm. In terms of biological role, the UvrABC repair system catalyzes the recognition and processing of DNA lesions. UvrC both incises the 5' and 3' sides of the lesion. The N-terminal half is responsible for the 3' incision and the C-terminal half is responsible for the 5' incision. The protein is UvrABC system protein C of Deinococcus geothermalis (strain DSM 11300 / CIP 105573 / AG-3a).